Here is a 451-residue protein sequence, read N- to C-terminus: F-box/LRR-repeat protein 13 (451 aa).

In terms of domain architecture, F-box spans 17 to 70; that stretch reads VDWISKLPDCLLCEVLLNLPTKDVVKTSVLSRRWRNLWKHVPGLDLDNTDFQEF. 4 LRR repeats span residues 128–155, 177–202, 224–251, and 335–363; these read DDSYGSWEVQLPSSIYTCESLVSLKLCG, TKFADDMGLETLITKCPVLESLTIER, VADSDEGVVEDLVVSIDAPKLEYLRLSD, and CVEFYGYMWEMLPIFLESCPNLKTLVVKS. Positions 370-421 constitute an FBD domain; it reads GENIILPGPRRFLSSLEYVKIERPLKGEAMEMKLVSYLLENSTILKKLTLCL.

The polypeptide is F-box/LRR-repeat protein 13 (FBL13) (Arabidopsis thaliana (Mouse-ear cress)).